A 141-amino-acid polypeptide reads, in one-letter code: High mobility group B protein 3 (141 aa).

Basic and acidic residues-rich tracts occupy residues Met1–Ser12 and Gly70–Gly110. Disordered stretches follow at residues Met1–Ser40 and Lys54–Asp141. The HMG box DNA-binding region spans Pro35–Asn104. A Phosphoserine modification is found at Ser122. Acidic residues predominate over residues Val124–Asp141.

The protein belongs to the HMGB family. Expressed in lateral roots, root tips, stems, cotyledons, leaves and flowers (excluding ovary and pedicels).

Its subcellular location is the nucleus. It localises to the cytoplasm. The protein resides in the cytosol. In terms of biological role, binds preferentially double-stranded DNA. The sequence is that of High mobility group B protein 3 (HMGB3) from Arabidopsis thaliana (Mouse-ear cress).